A 367-amino-acid chain; its full sequence is Germination protease (367 aa).

A propeptide spanning residues 1–13 (MEEQQIPFQVRTD) is cleaved from the precursor. Positions 267 to 287 (KDDPSKSLTPAGMSFGNRKLT) are disordered.

The protein belongs to the peptidase A25 family. Homotetramer. Autoproteolytically processed. The inactive tetrameric zymogen termed p46 autoprocesses to a smaller form termed p41, which is active only during spore germination.

The catalysed reaction is Endopeptidase action with P4 Glu or Asp, P1 preferably Glu &gt; Asp, P1' hydrophobic and P2' Ala.. Functionally, initiates the rapid degradation of small, acid-soluble proteins during spore germination. This is Germination protease from Oceanobacillus iheyensis (strain DSM 14371 / CIP 107618 / JCM 11309 / KCTC 3954 / HTE831).